Consider the following 1508-residue polypeptide: ABC-type transporter oblD (1508 aa).

2 disordered regions span residues Met1 to Asn35 and Lys54 to Gly82. Residues Thr11–Asn24 show a composition bias toward polar residues. N-linked (GlcNAc...) asparagine glycosylation is found at Asn24 and Asn35. The span at Tyr55–Pro68 shows a compositional bias: polar residues. N-linked (GlcNAc...) asparagine glycosylation is found at Asn83, Asn231, and Asn314. Residues Leu136–Asp390 enclose the ABC transporter 1 domain. The next 5 membrane-spanning stretches (helical) occupy residues Ile501 to Phe521, Leu536 to Tyr556, Gly610 to Phe630, Ala643 to Pro663, and Gly752 to Ile772. The ABC transporter 2 domain maps to Phe828 to Gly1070. Gly864 to Thr871 is an ATP binding site. 4 consecutive transmembrane segments (helical) span residues Tyr1172 to Tyr1192, Phe1206 to Phe1226, Leu1296 to Leu1316, and Ala1322 to Thr1342. The N-linked (GlcNAc...) asparagine glycan is linked to Asn1390. The helical transmembrane segment at Phe1443–Trp1463 threads the bilayer.

The protein belongs to the ABC transporter superfamily. ABCG family. PDR (TC 3.A.1.205) subfamily.

The protein localises to the cell membrane. In terms of biological role, ABC-type transporter; part of the gene cluster that mediates the biosynthesis of the sesterterpenes ophiobolins, fungal phytotoxins with potential anti-cancer activities. Acts as a specific transporter involved in ophiobolins secretion. In Cochliobolus heterostrophus (strain C5 / ATCC 48332 / race O) (Southern corn leaf blight fungus), this protein is ABC-type transporter oblD.